The chain runs to 107 residues: Flagellar transcriptional regulator FlhD (107 aa).

This sequence belongs to the FlhD family. As to quaternary structure, homodimer; disulfide-linked. Forms a heterohexamer composed of two FlhC and four FlhD subunits. Each FlhC binds a FlhD dimer, forming a heterotrimer, and a hexamer assembles by dimerization of two heterotrimers.

The protein resides in the cytoplasm. Functionally, functions in complex with FlhC as a master transcriptional regulator that regulates transcription of several flagellar and non-flagellar operons by binding to their promoter region. Activates expression of class 2 flagellar genes, including fliA, which is a flagellum-specific sigma factor that turns on the class 3 genes. Also regulates genes whose products function in a variety of physiological pathways. The polypeptide is Flagellar transcriptional regulator FlhD (Bordetella bronchiseptica (strain ATCC BAA-588 / NCTC 13252 / RB50) (Alcaligenes bronchisepticus)).